Reading from the N-terminus, the 178-residue chain is uncharacterized protein (178 aa).

In terms of biological role, this protein is non-essential for virus function. This is an uncharacterized protein from Sulfolobus spindle-shape virus 1 (SSV1).